A 368-amino-acid polypeptide reads, in one-letter code: Homoserine O-acetyltransferase (368 aa).

One can recognise an AB hydrolase-1 domain in the interval 43–346; it reads ILLEHALTGT…EYGHDAFLVE (304 aa). The active-site Nucleophile is the S145. Residue R212 coordinates substrate. Active-site residues include D307 and H340. D341 is a substrate binding site.

The protein belongs to the AB hydrolase superfamily. MetX family. As to quaternary structure, homodimer.

The protein localises to the cytoplasm. It carries out the reaction L-homoserine + acetyl-CoA = O-acetyl-L-homoserine + CoA. The protein operates within amino-acid biosynthesis; L-methionine biosynthesis via de novo pathway; O-acetyl-L-homoserine from L-homoserine: step 1/1. In terms of biological role, transfers an acetyl group from acetyl-CoA to L-homoserine, forming acetyl-L-homoserine. This is Homoserine O-acetyltransferase from Listeria innocua serovar 6a (strain ATCC BAA-680 / CLIP 11262).